The chain runs to 264 residues: 5'-nucleotidase SurE (264 aa).

A divalent metal cation contacts are provided by aspartate 12, aspartate 13, serine 43, and asparagine 98.

It belongs to the SurE nucleotidase family. Requires a divalent metal cation as cofactor.

The protein resides in the cytoplasm. It carries out the reaction a ribonucleoside 5'-phosphate + H2O = a ribonucleoside + phosphate. Nucleotidase that shows phosphatase activity on nucleoside 5'-monophosphates. This chain is 5'-nucleotidase SurE, found in Sulfurovum sp. (strain NBC37-1).